The chain runs to 273 residues: ATP synthase subunit a (273 aa).

7 helical membrane passes run 34-54, 94-114, 115-135, 143-163, 171-191, 218-238, and 244-264; these read IINM…CLFM, FIAP…SLDF, LPVD…LITH, DLNG…FYNI, FVHE…NLLL, FLLI…GHVV, and AIFH…LTLV.

It belongs to the ATPase A chain family. F-type ATPases have 2 components, CF(1) - the catalytic core - and CF(0) - the membrane proton channel. CF(1) has five subunits: alpha(3), beta(3), gamma(1), delta(1), epsilon(1). CF(0) has three main subunits: a(1), b(2) and c(9-12). The alpha and beta chains form an alternating ring which encloses part of the gamma chain. CF(1) is attached to CF(0) by a central stalk formed by the gamma and epsilon chains, while a peripheral stalk is formed by the delta and b chains.

It is found in the cell inner membrane. In terms of biological role, key component of the proton channel; it plays a direct role in the translocation of protons across the membrane. The protein is ATP synthase subunit a of Janthinobacterium sp. (strain Marseille) (Minibacterium massiliensis).